We begin with the raw amino-acid sequence, 110 residues long: Insulin (110 aa).

Residues 1–24 (MALWMRLLPLLALLALWGPDPAAA) form the signal peptide. 3 disulfides stabilise this stretch: cysteine 31-cysteine 96, cysteine 43-cysteine 109, and cysteine 95-cysteine 100. Positions 57-87 (EAEDLQVGQVELGGGPGAGSLQPLALEGSLQ) are cleaved as a propeptide — c peptide.

Belongs to the insulin family. In terms of assembly, heterodimer of a B chain and an A chain linked by two disulfide bonds.

The protein resides in the secreted. Insulin decreases blood glucose concentration. It increases cell permeability to monosaccharides, amino acids and fatty acids. It accelerates glycolysis, the pentose phosphate cycle, and glycogen synthesis in liver. The chain is Insulin (INS) from Gorilla gorilla gorilla (Western lowland gorilla).